Reading from the N-terminus, the 208-residue chain is Small ribosomal subunit protein uS4 (208 aa).

An S4 RNA-binding domain is found at 98–159 (RRLDNVVYRL…KSRNVAAISE (62 aa)).

This sequence belongs to the universal ribosomal protein uS4 family. As to quaternary structure, part of the 30S ribosomal subunit. Contacts protein S5. The interaction surface between S4 and S5 is involved in control of translational fidelity.

In terms of biological role, one of the primary rRNA binding proteins, it binds directly to 16S rRNA where it nucleates assembly of the body of the 30S subunit. With S5 and S12 plays an important role in translational accuracy. This is Small ribosomal subunit protein uS4 from Trichlorobacter lovleyi (strain ATCC BAA-1151 / DSM 17278 / SZ) (Geobacter lovleyi).